The primary structure comprises 221 residues: Cysteine protease inhibitor 8 (221 aa).

Residues Ile-1–Thr-26 form the signal peptide. The propeptide occupies Ser-27–Asn-42. Residues Asn-29–Pro-34 carry the Vacuolar targeting signal motif. 2 disulfide bridges follow: Cys-84/Cys-136 and Cys-184/Cys-190.

Belongs to the protease inhibitor I3 (leguminous Kunitz-type inhibitor) family.

The protein localises to the vacuole. Inhibitor of cysteine proteases. May protect the plant by inhibiting proteases of invading organisms. The protein is Cysteine protease inhibitor 8 of Solanum tuberosum (Potato).